The primary structure comprises 74 residues: Cytochrome c oxidase assembly factor 5 (74 aa).

In terms of domain architecture, CHCH spans 27–65 (QSACVLQEGKSPRQCLKEGNCRALQYSFFECKRSMLDAR). Residues 30 to 41 (CVLQEGKSPRQC) carry the Cx10C motif motif. 2 cysteine pairs are disulfide-bonded: cysteine 30–cysteine 57 and cysteine 41–cysteine 47. Serine 37 carries the post-translational modification Phosphoserine. The Cx9C motif signature appears at 47 to 57 (CRALQYSFFEC).

This sequence belongs to the PET191 family.

In terms of biological role, involved in an early step of the mitochondrial complex IV assembly process. The sequence is that of Cytochrome c oxidase assembly factor 5 (Coa5) from Mus musculus (Mouse).